Reading from the N-terminus, the 107-residue chain is Urease subunit beta (107 aa).

Belongs to the urease beta subunit family. In terms of assembly, heterotrimer of UreA (gamma), UreB (beta) and UreC (alpha) subunits. Three heterotrimers associate to form the active enzyme.

Its subcellular location is the cytoplasm. The enzyme catalyses urea + 2 H2O + H(+) = hydrogencarbonate + 2 NH4(+). The protein operates within nitrogen metabolism; urea degradation; CO(2) and NH(3) from urea (urease route): step 1/1. This chain is Urease subunit beta, found in Escherichia coli.